The sequence spans 412 residues: Serine hydroxymethyltransferase (412 aa).

(6S)-5,6,7,8-tetrahydrofolate is bound by residues Leu117 and 121-123 (GHL). Lys226 carries the N6-(pyridoxal phosphate)lysine modification.

The protein belongs to the SHMT family. Homodimer. Requires pyridoxal 5'-phosphate as cofactor.

The protein localises to the cytoplasm. It carries out the reaction (6R)-5,10-methylene-5,6,7,8-tetrahydrofolate + glycine + H2O = (6S)-5,6,7,8-tetrahydrofolate + L-serine. The protein operates within one-carbon metabolism; tetrahydrofolate interconversion. It participates in amino-acid biosynthesis; glycine biosynthesis; glycine from L-serine: step 1/1. Its function is as follows. Catalyzes the reversible interconversion of serine and glycine with tetrahydrofolate (THF) serving as the one-carbon carrier. This reaction serves as the major source of one-carbon groups required for the biosynthesis of purines, thymidylate, methionine, and other important biomolecules. Also exhibits THF-independent aldolase activity toward beta-hydroxyamino acids, producing glycine and aldehydes, via a retro-aldol mechanism. The sequence is that of Serine hydroxymethyltransferase from Staphylococcus saprophyticus subsp. saprophyticus (strain ATCC 15305 / DSM 20229 / NCIMB 8711 / NCTC 7292 / S-41).